A 161-amino-acid polypeptide reads, in one-letter code: Arachidonate 5-lipoxygenase-activating protein (161 aa).

Residues methionine 1–asparagine 8 are Lumenal-facing. The chain crosses the membrane as a helical span at residues isoleucine 9–valine 30. Over glutamate 31–arginine 52 the chain is Cytoplasmic. The chain crosses the membrane as a helical span at residues valine 53–leucine 77. Topologically, residues cysteine 78–glutamine 80 are lumenal. The helical transmembrane segment at valine 81–leucine 102 threads the bilayer. Topologically, residues glycine 103–glutamine 107 are cytoplasmic. Residues serine 108–glycine 115 lie within the membrane without spanning it. A helical transmembrane segment spans residues lysine 116–alanine 128. Over glycine 129–proline 161 the chain is Lumenal.

The protein belongs to the MAPEG family. In terms of assembly, homotrimer. Interacts with LTC4S and ALOX5.

The protein resides in the nucleus membrane. The protein localises to the endoplasmic reticulum membrane. Functionally, required for leukotriene biosynthesis by ALOX5 (5-lipoxygenase). Anchors ALOX5 to the membrane. Binds arachidonic acid, and could play an essential role in the transfer of arachidonic acid to ALOX5. Binds to MK-886, a compound that blocks the biosynthesis of leukotrienes. In Bos taurus (Bovine), this protein is Arachidonate 5-lipoxygenase-activating protein (ALOX5AP).